Reading from the N-terminus, the 435-residue chain is Xylose isomerase (435 aa).

Active-site residues include His-99 and Asp-102. Mg(2+) is bound by residues Glu-230, Glu-266, His-269, Asp-294, Asp-305, Asp-307, and Asp-337.

This sequence belongs to the xylose isomerase family. Homotetramer. The cofactor is Mg(2+).

The protein localises to the cytoplasm. It catalyses the reaction alpha-D-xylose = alpha-D-xylulofuranose. This chain is Xylose isomerase, found in Listeria welshimeri serovar 6b (strain ATCC 35897 / DSM 20650 / CCUG 15529 / CIP 8149 / NCTC 11857 / SLCC 5334 / V8).